The following is a 429-amino-acid chain: Probable M18 family aminopeptidase 2 (429 aa).

His82, His156, and His401 together coordinate Zn(2+).

The protein belongs to the peptidase M18 family. Zn(2+) is required as a cofactor.

The sequence is that of Probable M18 family aminopeptidase 2 from Pseudomonas fluorescens (strain SBW25).